A 283-amino-acid chain; its full sequence is 4-hydroxy-tetrahydrodipicolinate reductase (283 aa).

Residues 15–20 (GALGRM) and 116–118 (GTT) each bind NAD(+). The active-site Proton donor/acceptor is His172. A (S)-2,3,4,5-tetrahydrodipicolinate-binding site is contributed by His173. Catalysis depends on Lys176, which acts as the Proton donor. 182–183 (GT) serves as a coordination point for (S)-2,3,4,5-tetrahydrodipicolinate.

This sequence belongs to the DapB family.

It localises to the cytoplasm. It catalyses the reaction (S)-2,3,4,5-tetrahydrodipicolinate + NAD(+) + H2O = (2S,4S)-4-hydroxy-2,3,4,5-tetrahydrodipicolinate + NADH + H(+). It carries out the reaction (S)-2,3,4,5-tetrahydrodipicolinate + NADP(+) + H2O = (2S,4S)-4-hydroxy-2,3,4,5-tetrahydrodipicolinate + NADPH + H(+). Its pathway is amino-acid biosynthesis; L-lysine biosynthesis via DAP pathway; (S)-tetrahydrodipicolinate from L-aspartate: step 4/4. In terms of biological role, catalyzes the conversion of 4-hydroxy-tetrahydrodipicolinate (HTPA) to tetrahydrodipicolinate. This is 4-hydroxy-tetrahydrodipicolinate reductase from Prochlorococcus marinus (strain MIT 9313).